A 596-amino-acid polypeptide reads, in one-letter code: Elongation factor 4 (596 aa).

A tr-type G domain is found at 2–184 (KNIRNFSIIA…TIVKNIPSPA (183 aa)). GTP contacts are provided by residues 14-19 (DHGKST) and 131-134 (NKID).

This sequence belongs to the TRAFAC class translation factor GTPase superfamily. Classic translation factor GTPase family. LepA subfamily.

The protein localises to the cell inner membrane. It catalyses the reaction GTP + H2O = GDP + phosphate + H(+). Required for accurate and efficient protein synthesis under certain stress conditions. May act as a fidelity factor of the translation reaction, by catalyzing a one-codon backward translocation of tRNAs on improperly translocated ribosomes. Back-translocation proceeds from a post-translocation (POST) complex to a pre-translocation (PRE) complex, thus giving elongation factor G a second chance to translocate the tRNAs correctly. Binds to ribosomes in a GTP-dependent manner. The chain is Elongation factor 4 from Colwellia psychrerythraea (strain 34H / ATCC BAA-681) (Vibrio psychroerythus).